A 227-amino-acid polypeptide reads, in one-letter code: Claudin-15 (227 aa).

A topological domain (cytoplasmic) is located at residue M1. A helical membrane pass occupies residues 2–24 (SVAVETFGFFMSALGLLMLGLTL). The Extracellular portion of the chain corresponds to 25–74 (SNSYWRVSTVHGNVITTNTIFENLWYSCATDSLGVSNCWDFPSMLALSGY). Cysteines 52 and 62 form a disulfide. A helical transmembrane segment spans residues 75–99 (VQGCRALMITAILLGFLGLFLGMVG). Residues 100 to 115 (LRCTNVGNMDLSKKAK) lie on the Cytoplasmic side of the membrane. S111 bears the Phosphoserine mark. The chain crosses the membrane as a helical span at residues 116–140 (LLAIAGTLHILAGACGMVAISWYAV). Residues 141-159 (NITTDFFNPLYAGTKYELG) are Extracellular-facing. An important for the formation of tight-junction strand-like structures region spans residues 146 to 147 (FF). Residues 160-182 (PALYLGWSASLLSILGGICVFST) traverse the membrane as a helical segment. Topologically, residues 183–227 (CCCSSKEEPATRAGLPYKPSTVVIPRATSDESDISFGKYGKNAYV) are cytoplasmic. Residues S211, S214, and S217 each carry the phosphoserine modification.

Belongs to the claudin family. As to quaternary structure, can form homo- and heteropolymeric tight junction strands. In terms of processing, palmitoylated when heterogeneously expressed in S.frugiperda cells. In terms of tissue distribution, detected in duodenum, jejunum and ileum. Detected on intestinal villi and crypts (at protein level). Ubiquitous. Detected in small and large intestine, colon, jejunum, heart, kidney and lung.

It is found in the cell junction. It localises to the tight junction. The protein localises to the cell membrane. The enzyme catalyses Na(+)(in) = Na(+)(out). It catalyses the reaction K(+)(in) = K(+)(out). It carries out the reaction Cs(+)(in) = Cs(+)(out). The catalysed reaction is Rb(+)(in) = Rb(+)(out). The enzyme catalyses Li(+)(in) = Li(+)(out). It catalyses the reaction NH4(+)(in) = NH4(+)(out). It carries out the reaction methylamine(out) = methylamine(in). The catalysed reaction is H2O(in) = H2O(out). Functionally, forms paracellular channels: polymerizes in tight junction strands with cation- and water-selective channels through the strands, conveying epithelial permeability in a process known as paracellular tight junction permeability. In intestinal epithelium, allows for sodium and water fluxes from the peritoneal side to the lumen of the intestine to regulate nutrient absorption and intestinal morphogenesis. This is Claudin-15 from Mus musculus (Mouse).